The sequence spans 90 residues: Small ribosomal subunit protein uS15 (90 aa).

The protein belongs to the universal ribosomal protein uS15 family. In terms of assembly, part of the 30S ribosomal subunit. Forms a bridge to the 50S subunit in the 70S ribosome, contacting the 23S rRNA.

Functionally, one of the primary rRNA binding proteins, it binds directly to 16S rRNA where it helps nucleate assembly of the platform of the 30S subunit by binding and bridging several RNA helices of the 16S rRNA. In terms of biological role, forms an intersubunit bridge (bridge B4) with the 23S rRNA of the 50S subunit in the ribosome. This chain is Small ribosomal subunit protein uS15, found in Aliarcobacter butzleri (strain RM4018) (Arcobacter butzleri).